Reading from the N-terminus, the 368-residue chain is MLIHICCSVDNLYFLKKAKEAFAGEKIVGFFYNPNIHPYSEYLLRLEDVKRTCEMLGIELLEGDYELEKFLDKAKGKELLGEKSERCFECFDLRLEASALKAFELGEEKFTTTLLTSPKKDPNQLIAKGQSIAQRHNLEFVVFRNDNFEHFKSELDLNLQALARENELYRQNYCGCQFALKIQKESQNRSPFELYSPLKRQILPASIEERTQVFRTLDMAKKDANKPFLAQKTIATYRLLNGGVWLSKNSNPLNCCILARSKSKAKVRINDLRWVFSQRLSVLVGYSQRDETLFLTLEGLNTLMAKNYDNLKELNLNPLNYEEELSLRALVSGSESINPIIVLEERTEKTLFVEIKSVFQEEKVFYLL.

[4Fe-4S] cluster is bound by residues Cys6, Cys7, Cys87, and Cys90. A disulfide bridge connects residues Cys174 and Cys176.

Belongs to the QueH family.

It catalyses the reaction epoxyqueuosine(34) in tRNA + AH2 = queuosine(34) in tRNA + A + H2O. The protein operates within tRNA modification; tRNA-queuosine biosynthesis. Its function is as follows. Catalyzes the conversion of epoxyqueuosine (oQ) to queuosine (Q), which is a hypermodified base found in the wobble positions of tRNA(Asp), tRNA(Asn), tRNA(His) and tRNA(Tyr). This is Epoxyqueuosine reductase QueH from Helicobacter pylori (strain ATCC 700392 / 26695) (Campylobacter pylori).